The primary structure comprises 214 residues: MKVFLIGANGQIGQRLVSLFQDNPDHSIRAMVRKEEQKASLEAAGAEAVLANLEGSPEEIAAAAKGCDAIIFTAGSGGSTGYDKTLLVDLDGAAKAIEAAAIAGIKRFIMVSALQAHNRENWNEALKPYYVAKHYADKILEASGLTYTIIRPGGLRNEPGTGTVSAAKDLERGFISRDDVAKTVIASLDEKNTENRAFDLTEGDTPIAEALKKL.

The active-site Proton acceptor is Y129.

Belongs to the NAD(P)-dependent epimerase/dehydratase family.

This is an uncharacterized protein from Bacillus subtilis (strain 168).